Reading from the N-terminus, the 367-residue chain is Heparan sulfate glucosamine 3-O-sulfotransferase 2 (367 aa).

At 1 to 19 (MAYRVLGRAGPPQPRRARR) the chain is on the cytoplasmic side. The helical; Signal-anchor for type II membrane protein transmembrane segment at 20-39 (LLFAFTLSLSCTYLCYSFLC) threads the bilayer. The Lumenal portion of the chain corresponds to 40–367 (CCDDLGRSRL…ETVGQDFRWE (328 aa)). Residues 61 to 110 (AGGQKLLQKSRPCDPSGPTPSEPSAPSAPAAAVPAPRLSGSNHSGSPKLG) are disordered. A compositionally biased stretch (low complexity) spans 84-96 (SAPSAPAAAVPAP). A glycan (N-linked (GlcNAc...) asparagine) is linked at asparagine 102. 124–128 (KGGTR) lines the 3'-phosphoadenylyl sulfate pocket. Substrate-binding positions include 146-152 (EPHFFDR) and 177-180 (KTPS). N-linked (GlcNAc...) asparagine glycosylation is present at asparagine 193. 3'-phosphoadenylyl sulfate is bound by residues arginine 205 and serine 213. Residue asparagine 235 is glycosylated (N-linked (GlcNAc...) asparagine). 245 to 246 (WN) is a binding site for substrate. The N-linked (GlcNAc...) asparagine glycan is linked to asparagine 306. Cysteine 313 and cysteine 325 form a disulfide bridge. 330–334 (KGRTH) is a 3'-phosphoadenylyl sulfate binding site.

The protein belongs to the sulfotransferase 1 family. Highly expressed in the brain and weakly expressed in the heart, placenta, lung and skeletal muscle.

The protein resides in the golgi apparatus membrane. The enzyme catalyses alpha-D-glucosaminyl-[heparan sulfate](n) + 3'-phosphoadenylyl sulfate = 3-sulfo-alpha-D-glucosaminyl-[heparan sulfate](n) + adenosine 3',5'-bisphosphate + H(+). In terms of biological role, sulfotransferase that utilizes 3'-phospho-5'-adenylyl sulfate (PAPS) to catalyze the transfer of a sulfo group to an N-unsubstituted glucosamine linked to a 2-O-sulfo iduronic acid unit on heparan sulfate. Catalyzes the O-sulfation of glucosamine in GlcA2S-GlcNS. Unlike HS3ST1/3-OST-1, does not convert non-anticoagulant heparan sulfate to anticoagulant heparan sulfate. This Homo sapiens (Human) protein is Heparan sulfate glucosamine 3-O-sulfotransferase 2 (HS3ST2).